The primary structure comprises 204 residues: MGAYRYVQELYRKKQSDVLRYLLRVRCWQYRQLTKLHRAPRPSRPDKARRLGYKAKQGFLIYRIRVRRGGRKRPVHKGCTYGKPKSHGVNQLKPYRNLQSVAEERVGRRMGGLRVLNSYWVAQDAAFKYYEVICVDPFHNAVRRDPKVNWVCNAVHKHRELRGLTSAGKSSRGVGKGYRYSQTIGGSRRAAWRRKNRLHLRRYR.

Belongs to the eukaryotic ribosomal protein eL15 family.

This is Large ribosomal subunit protein eL15 (RpL15) from Chironomus tentans (Midge).